Here is a 355-residue protein sequence, read N- to C-terminus: Putative beta-lactamase HcpE (355 aa).

The first 22 residues, 1 to 22, serve as a signal peptide directing secretion; sequence MGVKFLKILVCGLFFWSLNAHL. 8 TPR repeats span residues 27 to 60, 63 to 96, 98 to 131, 132 to 166, 202 to 240, 245 to 275, 276 to 311, and 312 to 344; these read DNSF…GVSE, TQLG…DDRE, CFGL…LKHP, ESCY…DMAK, GQAC…NNSG, LGSM…MGSA, VSCS…MGDE, and VGCF…GMKQ. 9 disulfide bridges follow: Cys-54–Cys-62, Cys-90–Cys-98, Cys-126–Cys-134, Cys-160–Cys-168, Cys-197–Cys-205, Cys-234–Cys-242, Cys-270–Cys-278, Cys-306–Cys-314, and Cys-338–Cys-346.

Belongs to the hcp beta-lactamase family.

It localises to the secreted. The catalysed reaction is a beta-lactam + H2O = a substituted beta-amino acid. Its function is as follows. May hydrolyze 6-aminopenicillinic acid and 7-aminocephalosporanic acid (ACA) derivatives. The chain is Putative beta-lactamase HcpE (hcpE) from Helicobacter pylori (strain ATCC 700392 / 26695) (Campylobacter pylori).